Consider the following 348-residue polypeptide: RNA 3'-terminal phosphate cyclase (348 aa).

ATP is bound by residues Q102 and 285–288 (HMGD). H311 functions as the Tele-AMP-histidine intermediate in the catalytic mechanism.

This sequence belongs to the RNA 3'-terminal cyclase family. Type 1 subfamily.

The protein resides in the cytoplasm. The enzyme catalyses a 3'-end 3'-phospho-ribonucleotide-RNA + ATP = a 3'-end 2',3'-cyclophospho-ribonucleotide-RNA + AMP + diphosphate. In terms of biological role, catalyzes the conversion of 3'-phosphate to a 2',3'-cyclic phosphodiester at the end of RNA. The mechanism of action of the enzyme occurs in 3 steps: (A) adenylation of the enzyme by ATP; (B) transfer of adenylate to an RNA-N3'P to produce RNA-N3'PP5'A; (C) and attack of the adjacent 2'-hydroxyl on the 3'-phosphorus in the diester linkage to produce the cyclic end product. The biological role of this enzyme is unknown but it is likely to function in some aspects of cellular RNA processing. The protein is RNA 3'-terminal phosphate cyclase of Korarchaeum cryptofilum (strain OPF8).